The primary structure comprises 135 residues: Basic phospholipase A2 10 (135 aa).

Intrachain disulfides connect C28-C87, C42-C134, C44-C60, C59-C115, C66-C108, C76-C101, and C94-C106. Residues Y43, G45, and G47 each coordinate Ca(2+). The active site involves H63. Ca(2+) is bound at residue D64. The active site involves D109.

The protein belongs to the phospholipase A2 family. Group I subfamily. D49 sub-subfamily. It depends on Ca(2+) as a cofactor. As to expression, expressed by the venom gland.

It is found in the secreted. The enzyme catalyses a 1,2-diacyl-sn-glycero-3-phosphocholine + H2O = a 1-acyl-sn-glycero-3-phosphocholine + a fatty acid + H(+). Its function is as follows. Snake venom phospholipase A2 (PLA2) that inhibits neuromuscular transmission by blocking acetylcholine release from the nerve termini. PLA2 catalyzes the calcium-dependent hydrolysis of the 2-acyl groups in 3-sn-phosphoglycerides. The protein is Basic phospholipase A2 10 of Bungarus fasciatus (Banded krait).